Reading from the N-terminus, the 911-residue chain is Valine--tRNA ligase (911 aa).

The short motif at 57-67 (PTVSGSLHVGH) is the 'HIGH' region element. The 'KMSKS' region motif lies at 599 to 603 (KMSKS). Lysine 602 provides a ligand contact to ATP. The interval 882 to 911 (EESAAEGTPETEVAVEASELGEPPAKKPKH) is disordered.

This sequence belongs to the class-I aminoacyl-tRNA synthetase family. ValS type 2 subfamily. Monomer.

Its subcellular location is the cytoplasm. The enzyme catalyses tRNA(Val) + L-valine + ATP = L-valyl-tRNA(Val) + AMP + diphosphate. Functionally, catalyzes the attachment of valine to tRNA(Val). As ValRS can inadvertently accommodate and process structurally similar amino acids such as threonine, to avoid such errors, it has a 'posttransfer' editing activity that hydrolyzes mischarged Thr-tRNA(Val) in a tRNA-dependent manner. The chain is Valine--tRNA ligase from Bifidobacterium longum (strain NCC 2705).